We begin with the raw amino-acid sequence, 106 residues long: Large ribosomal subunit protein uL23 (106 aa).

The protein belongs to the universal ribosomal protein uL23 family. In terms of assembly, part of the 50S ribosomal subunit. Contacts protein L29, and trigger factor when it is bound to the ribosome.

In terms of biological role, one of the early assembly proteins it binds 23S rRNA. One of the proteins that surrounds the polypeptide exit tunnel on the outside of the ribosome. Forms the main docking site for trigger factor binding to the ribosome. The sequence is that of Large ribosomal subunit protein uL23 from Acinetobacter baumannii (strain AB307-0294).